The chain runs to 84 residues: U4-theraphotoxin-Hhn1aa (84 aa).

Positions 1–22 (MKVTLIAILTCAAVLVLHTTAA) are cleaved as a signal peptide. Residues 23 to 47 (EELEESQLMEVGMPDTELAAVDEER) constitute a propeptide that is removed on maturation. Cystine bridges form between Cys51–Cys65 and Cys55–Cys76.

Belongs to the neurotoxin 12 (Hwtx-2) family. 02 (Hwtx-2) subfamily. In terms of tissue distribution, expressed by the venom gland.

It localises to the secreted. In terms of biological role, postsynaptic neurotoxin. The polypeptide is U4-theraphotoxin-Hhn1aa (Cyriopagopus hainanus (Chinese bird spider)).